Here is a 220-residue protein sequence, read N- to C-terminus: Ribose-5-phosphate isomerase A (220 aa).

Substrate is bound by residues threonine 28–threonine 31, aspartate 81–aspartate 84, and lysine 94–glycine 97. The active-site Proton acceptor is the glutamate 103. Lysine 121 provides a ligand contact to substrate.

It belongs to the ribose 5-phosphate isomerase family. In terms of assembly, homodimer.

It carries out the reaction aldehydo-D-ribose 5-phosphate = D-ribulose 5-phosphate. It functions in the pathway carbohydrate degradation; pentose phosphate pathway; D-ribose 5-phosphate from D-ribulose 5-phosphate (non-oxidative stage): step 1/1. Functionally, catalyzes the reversible conversion of ribose-5-phosphate to ribulose 5-phosphate. This is Ribose-5-phosphate isomerase A from Leptothrix cholodnii (strain ATCC 51168 / LMG 8142 / SP-6) (Leptothrix discophora (strain SP-6)).